Consider the following 399-residue polypeptide: ASTKGPSVFPLAPSSKSTSGGTAALGCLVKDYFPEPVTVSWNSGALTSGVHTFPAVLQSSGLYSLSSVVTVPSSSLGTQTYICNVNHKPSNTKVDKKVEPKSCDKTHTCPPCPAPELLGGPSVFLFPPKPKDTLMISRTPEVTCVVVDVSHEDPEVKFNWYVDGVEVHNAKTKPREEQYNSTYRVVSVLTVLHQDWLNGKEYKCKVSNKALPAPIEKTISKAKGQPREPQVYTLPPSRDELTKNQVSLTCLVKGFYPSDIAVEWESNGQPENNYKTTPPVLDSDGSFFLYSKLTVDKSRWQQGNVFSCSVMHEALHNHYTQKSLSLSPELQLEESCAEAQDGELDGLWTTITIFITLFLLSVCYSATVTFFKVKWIFSSVVDLKQTIIPDYRNMIGQGA.

Positions 1–21 (ASTKGPSVFPLAPSSKSTSGG) are disordered. A CH1 region spans residues 1–98 (ASTKGPSVFP…PSNTKVDKKV (98 aa)). At 1–350 (ASTKGPSVFP…DGELDGLWTT (350 aa)) the chain is on the extracellular side. Ig-like domains follow at residues 6 to 99 (PSVF…KKVE), 121 to 220 (PSVF…KTIS), and 229 to 325 (PQVY…KSLS). A disulfide bond links cysteine 27 and cysteine 83. The interval 99–110 (EPKSCDKTHTCP) is hinge. The interval 111-223 (PCPAPELLGG…PIEKTISKAK (113 aa)) is CH2. 2 disulfide bridges follow: cysteine 144–cysteine 204 and cysteine 250–cysteine 308. Asparagine 180 is a glycosylation site (N-linked (GlcNAc...) (complex) asparagine). Residues 224–330 (GQPREPQVYT…QKSLSLSPEL (107 aa)) form a CH3 region. The helical transmembrane segment at 351 to 371 (ITIFITLFLLSVCYSATVTFF) threads the bilayer. At 372 to 399 (KVKWIFSSVVDLKQTIIPDYRNMIGQGA) the chain is on the cytoplasmic side.

Immunoglobulins are composed of two identical heavy chains and two identical light chains; disulfide-linked. Interacts with FCGR1A; this interaction mediates IgG effector functions on monocytes. Interacts with FCGR2A and FCGR3A. Post-translationally, glycosylation on Asn-180 is required for interaction with Fc receptors and ability to activate the complement pathway. In terms of processing, (Microbial infection) Deglycosylation on Asn-180 by S.pyogenes EndoS or Endos2 endoglucosidases prevents interaction between immunoglobulin-gamma (IgG) and Fc receptors, impairing ability to activate the complement pathway.

Its subcellular location is the secreted. The protein localises to the cell membrane. Its function is as follows. Constant region of immunoglobulin heavy chains. Immunoglobulins, also known as antibodies, are membrane-bound or secreted glycoproteins produced by B lymphocytes. In the recognition phase of humoral immunity, the membrane-bound immunoglobulins serve as receptors which, upon binding of a specific antigen, trigger the clonal expansion and differentiation of B lymphocytes into immunoglobulins-secreting plasma cells. Secreted immunoglobulins mediate the effector phase of humoral immunity, which results in the elimination of bound antigens. The antigen binding site is formed by the variable domain of one heavy chain, together with that of its associated light chain. Thus, each immunoglobulin has two antigen binding sites with remarkable affinity for a particular antigen. The variable domains are assembled by a process called V-(D)-J rearrangement and can then be subjected to somatic hypermutations which, after exposure to antigen and selection, allow affinity maturation for a particular antigen. Mediates IgG effector functions on monocytes triggering ADCC of virus-infected cells. This is Immunoglobulin heavy constant gamma 1 from Homo sapiens (Human).